The sequence spans 410 residues: Beta-arrestin-2 (410 aa).

Position 48 is a phosphotyrosine (Tyr48). 2 positions are modified to hydroxyproline; by PHD2: Pro176 and Pro181. The interval 241-410 is interaction with TRAF6; sequence ADICLFSTAQ…KDDDCDDQFC (170 aa). A Phosphoserine modification is found at Ser361. The segment at 378 to 410 is interaction with AP2B1; it reads DTNYATDDDIVFEDFARLRLKGMKDDDCDDQFC. Phosphothreonine; by CaMK2 is present on Thr383. The [DE]-X(1,2)-F-X-X-[FL]-X-X-X-R motif signature appears at 386–396; it reads DIVFEDFARLR.

The protein belongs to the arrestin family. Homooligomer; the self-association is mediated by InsP6-binding. Heterooligomer with ARRB1; the association is mediated by InsP6-binding. Interacts with ADRB2 and CHRM2. Interacts with PDE4A. Interacts with PDE4D. Interacts with MAPK10, MAPK1 and MAPK3. Interacts with DRD2. Interacts with FSHR. Interacts with CLTC. Interacts with HTR2C. Interacts with CCR5. Interacts with CXCR4. Interacts with SRC. Interacts with DUSP16; the interaction is interrupted by stimulation of AGTR1 and activation of MAPK10. Interacts with CHUK; the interaction is enhanced stimulation of ADRB2. Interacts with RELA. Interacts with MDM2; the interaction is enhanced by activation of GPCRs. Interacts with SLC9A5. Interacts with TRAF6. Interacts with IGF1R. Interacts with ENG. Interacts with KIR2DL1, KIR2DL3 and KIR2DL4. Interacts with LDLR. Interacts with AP2B1. Interacts with C5AR1. Interacts with RAF1. Interacts with MAP2K1. Interacts with MAPK1. Interacts with MAPK10; the interaction enhances MAPK10 activation by MAP3K5. Interacts with MAP2K4; the interaction is enhanced by presence of MAP3K5 and MAPK10. Interacts with MAP3K5. Interacts with AKT1. Interacts with IKBKB and MAP3K14. Interacts with SMO (activated). Interacts with GSK3A and GSK3B. Associates with protein phosphatase 2A (PP2A). Interacts with CXCR4; the interaction is dependent on C-terminal phosphorylation of CXCR4 and allows activation of MAPK1 and MAPK3. Interacts with GPR143. Interacts with HCK and CXCR1 (phosphorylated). Interacts with ACKR3 and ACKR4. Interacts with ARRDC1; the interaction is direct. Interacts with GPR61, GPR62 and GPR135. Interacts (via NACHT and LRR domains) with NLRP3; this interaction is direct and inducible by omega-3 polyunsaturated fatty acids (PUFAs). Interacts with FFAR4 (via C-terminus); this interaction is stimulated by long-chain fatty acids (LCFAs). Interacts with GPR35. Interacts with GPR84. Interacts with TIGIT; this interaction inhibits the NF-kappa-B pathway. Interacts with TGFBR3. In terms of processing, phosphorylated at Thr-383 in the cytoplasm; probably dephosphorylated at the plasma membrane. The phosphorylation does not regulate internalization and recycling of ADRB2, interaction with clathrin or AP2B1. The ubiquitination status appears to regulate the formation and trafficking of beta-arrestin-GPCR complexes and signaling. Ubiquitination appears to occur GPCR-specific. Ubiquitinated by MDM2; the ubiquitination is required for rapid internalization of ADRB2. Deubiquitinated by USP33; the deubiquitination leads to a dissociation of the beta-arrestin-GPCR complex. Stimulation of a class A GPCR, such as ADRB2, induces transient ubiquitination and subsequently promotes association with USP33. Stimulation of a class B GPCR promotes a sustained ubiquitination. Deubiquitinated by USP20; allowing USP20 to deubiquitinate TRAF6 leading to inhibition of NF-kappa-B signaling. Post-translationally, hydroxylation by PHD2 modulates the rate of internalization by slowing down recruitment to the plasma membrane and inhibiting subsequent co-internalization with class A receptors. Predominantly localized in neuronal tissues and in the spleen.

It is found in the cytoplasm. It localises to the nucleus. The protein resides in the cell membrane. Its subcellular location is the membrane. The protein localises to the clathrin-coated pit. It is found in the cytoplasmic vesicle. Functions in regulating agonist-mediated G-protein coupled receptor (GPCR) signaling by mediating both receptor desensitization and resensitization processes. During homologous desensitization, beta-arrestins bind to the GPRK-phosphorylated receptor and sterically preclude its coupling to the cognate G-protein; the binding appears to require additional receptor determinants exposed only in the active receptor conformation. The beta-arrestins target many receptors for internalization by acting as endocytic adapters (CLASPs, clathrin-associated sorting proteins) and recruiting the GPRCs to the adapter protein 2 complex 2 (AP-2) in clathrin-coated pits (CCPs). However, the extent of beta-arrestin involvement appears to vary significantly depending on the receptor, agonist and cell type. Internalized arrestin-receptor complexes traffic to intracellular endosomes, where they remain uncoupled from G-proteins. Two different modes of arrestin-mediated internalization occur. Class A receptors, like ADRB2, OPRM1, ENDRA, D1AR and ADRA1B dissociate from beta-arrestin at or near the plasma membrane and undergo rapid recycling. Class B receptors, like AVPR2, AGTR1, NTSR1, TRHR and TACR1 internalize as a complex with arrestin and traffic with it to endosomal vesicles, presumably as desensitized receptors, for extended periods of time. Receptor resensitization then requires that receptor-bound arrestin is removed so that the receptor can be dephosphorylated and returned to the plasma membrane. Mediates endocytosis of CCR7 following ligation of CCL19 but not CCL21. Involved in internalization of P2RY1, P2RY4, P2RY6 and P2RY11 and ATP-stimulated internalization of P2RY2. Involved in phosphorylation-dependent internalization of OPRD1 and subsequent recycling or degradation. Involved in ubiquitination of IGF1R. Beta-arrestins function as multivalent adapter proteins that can switch the GPCR from a G-protein signaling mode that transmits short-lived signals from the plasma membrane via small molecule second messengers and ion channels to a beta-arrestin signaling mode that transmits a distinct set of signals that are initiated as the receptor internalizes and transits the intracellular compartment. Acts as a signaling scaffold for MAPK pathways such as MAPK1/3 (ERK1/2) and MAPK10 (JNK3). ERK1/2 and JNK3 activated by the beta-arrestin scaffold are largely excluded from the nucleus and confined to cytoplasmic locations such as endocytic vesicles, also called beta-arrestin signalosomes. Acts as a signaling scaffold for the AKT1 pathway. GPCRs for which the beta-arrestin-mediated signaling relies on both ARRB1 and ARRB2 (codependent regulation) include ADRB2, F2RL1 and PTH1R. For some GPCRs the beta-arrestin-mediated signaling relies on either ARRB1 or ARRB2 and is inhibited by the other respective beta-arrestin form (reciprocal regulation). Increases ERK1/2 signaling in AGTR1- and AVPR2-mediated activation (reciprocal regulation). Involved in CCR7-mediated ERK1/2 signaling involving ligand CCL19. Is involved in type-1A angiotensin II receptor/AGTR1-mediated ERK activity. Is involved in type-1A angiotensin II receptor/AGTR1-mediated MAPK10 activity. Is involved in dopamine-stimulated AKT1 activity in the striatum by disrupting the association of AKT1 with its negative regulator PP2A. Involved in AGTR1-mediated chemotaxis. Appears to function as signaling scaffold involved in regulation of MIP-1-beta-stimulated CCR5-dependent chemotaxis. Involved in attenuation of NF-kappa-B-dependent transcription in response to GPCR or cytokine stimulation by interacting with and stabilizing CHUK. Suppresses UV-induced NF-kappa-B-dependent activation by interacting with CHUK. The function is promoted by stimulation of ADRB2 and dephosphorylation of ARRB2. Involved in IL8-mediated granule release in neutrophils. Involved in p53/TP53-mediated apoptosis by regulating MDM2 and reducing the MDM2-mediated degradation of p53/TP53. May serve as nuclear messenger for GPCRs. Upon stimulation of OR1D2, may be involved in regulation of gene expression during the early processes of fertilization. Also involved in regulation of receptors other than GPCRs. Involved in endocytosis of TGFBR2 and TGFBR3 and down-regulates TGF-beta signaling such as NF-kappa-B activation. Involved in endocytosis of low-density lipoprotein receptor/LDLR. Involved in endocytosis of smoothened homolog/Smo, which also requires GRK2. Involved in endocytosis of SLC9A5. Involved in endocytosis of ENG and subsequent TGF-beta-mediated ERK activation and migration of epithelial cells. Involved in Toll-like receptor and IL-1 receptor signaling through the interaction with TRAF6 which prevents TRAF6 autoubiquitination and oligomerization required for activation of NF-kappa-B and JUN. Involved in insulin resistance by acting as insulin-induced signaling scaffold for SRC, AKT1 and INSR. Involved in regulation of inhibitory signaling of natural killer cells by recruiting PTPN6 and PTPN11 to KIR2DL1. Involved in the internalization of the atypical chemokine receptor ACKR3. Acts as an adapter protein coupling FFAR4 receptor to specific downstream signaling pathways, as well as mediating receptor endocytosis. During the activation step of NLRP3 inflammasome, directly associates with NLRP3 leading to inhibition of pro-inflammatory cytokine release and inhibition of inflammation. In Rattus norvegicus (Rat), this protein is Beta-arrestin-2 (Arrb2).